We begin with the raw amino-acid sequence, 129 residues long: Follitropin subunit beta (129 aa).

Positions 1-18 (MKSVQFCFLFCCWRAICC) are cleaved as a signal peptide. Intrachain disulfides connect Cys-21/Cys-69, Cys-35/Cys-84, Cys-38/Cys-122, Cys-46/Cys-100, Cys-50/Cys-102, and Cys-105/Cys-112. Residues Asn-25 and Asn-42 are each glycosylated (N-linked (GlcNAc...) asparagine).

It belongs to the glycoprotein hormones subunit beta family. Heterodimer. The active follitropin is a heterodimer composed of an alpha chain/CGA shared with other hormones and a unique beta chain/FSHB shown here.

It is found in the secreted. Its function is as follows. Together with the alpha chain CGA constitutes follitropin, the follicle-stimulating hormone, and provides its biological specificity to the hormone heterodimer. Binds FSHR, a G protein-coupled receptor, on target cells to activate downstream signaling pathways. Follitropin is involved in follicle development and spermatogenesis in reproductive organs. In Capra hircus (Goat), this protein is Follitropin subunit beta (FSHB).